A 480-amino-acid polypeptide reads, in one-letter code: CASP8 and FADD-like apoptosis regulator (480 aa).

2 consecutive DED domains span residues 1-73 (MSAE…RILK) and 92-170 (DYRV…KIQK). An interaction with CASP8 region spans residues 1–195 (MSAEVIHQVE…LQAAIQKSFK (195 aa)). An interaction with FADD region spans residues 1–227 (MSAEVIHQVE…GTQQEPVKKS (227 aa)). The tract at residues 1–305 (MSAEVIHQVE…FACMPEHRDY (305 aa)) is interaction with CASP8 propeptide. Residues 1–435 (MSAEVIHQVE…CLSQKLRQER (435 aa)) are not proteolytically processed and involved in apoptosis inhibition. The interaction with CASP3 stretch occupies residues 192–435 (KSFKDPSNNF…CLSQKLRQER (244 aa)). Positions 192–480 (KSFKDPSNNF…LRKKLIPSYT (289 aa)) are interaction with TRAF1 and TRAF2. The interval 217-480 (LGTQQEPVKK…LRKKLIPSYT (264 aa)) is interaction with CASP8 subunits p18 and p10. The tract at residues 263–358 (ETELLRDTFT…AGKPKIFFIQ (96 aa)) is caspase. The segment at 370 to 480 (SSLLEVDGPA…LRKKLIPSYT (111 aa)) is interaction with CASP8.

It belongs to the peptidase C14A family. As to quaternary structure, TNFRSF6 stimulation triggers recruitment to the death-inducing signaling complex (DISC) formed by TNFRSF6, FADD and CASP8. A proteolytic fragment (p43) stays associated with the DISC. Interacts with RIPK1. Post-translationally, proteolytically processed by CASP8 generating subunit p43 and p12.

Functionally, apoptosis regulator protein which may function as a crucial link between cell survival and cell death pathways in mammalian cells. Acts as an inhibitor of TNFRSF6 mediated apoptosis. A proteolytic fragment (p43) is likely retained in the death-inducing signaling complex (DISC) thereby blocking further recruitment and processing of caspase-8 at the complex. Full length and shorter isoforms have been shown either to induce apoptosis or to reduce TNFRSF-triggered apoptosis. Lacks enzymatic (caspase) activity. This Pongo abelii (Sumatran orangutan) protein is CASP8 and FADD-like apoptosis regulator (CFLAR).